The following is a 1462-amino-acid chain: Gag-Pol polyprotein (1462 aa).

Glycine 2 carries the N-myristoyl glycine; by host lipid modification. The Nuclear export signal motif lies at 16 to 22 (WESIRLK). A Nuclear localization signal motif is present at residues 26–32 (RKKYLIK). Composition is skewed to polar residues over residues 113-125 (NNST…QRQN) and 135-151 (PSGN…TPSG). Residues 113–153 (NNSTATSSGQRQNAGEKEETVPPSGNTGNTGRATETPSGSR) are disordered. Residue tyrosine 155 is modified to Phosphotyrosine; by host. 2 CCHC-type zinc fingers span residues 417-434 (LQCF…NCRA) and 438-455 (KGCW…DCTT). The disordered stretch occupies residues 482–513 (EHPREREGSGAGDSTDTSGANCPTTGDDDERR). The Peptidase A2 domain maps to 535–604 (CQALLDTGAD…TPINIIGRNI (70 aa)). Catalysis depends on aspartate 540, which acts as the For protease activity; shared with dimeric partner. Residues 658–848 (EGKISAVGPE…PPFMWMGYEL (191 aa)) enclose the Reverse transcriptase domain. Residues aspartate 724, aspartate 799, and aspartate 800 each coordinate Mg(2+). The segment at 841–849 (FMWMGYELH) is RT 'primer grip'. Positions 1012–1028 (WSQWWTDYWQVTWVPEW) match the Tryptophan repeat motif motif. One can recognise an RNase H type-1 domain in the interval 1048–1171 (IPEAETFYVD…VDKLVSKNIR (124 aa)). The Mg(2+) site is built by aspartate 1057, glutamate 1092, aspartate 1112, and aspartate 1163. Residues 1177–1218 (DGINEAQEDHDKYHSNWKALADEYNLPPVVAKEIIAQCPKCH) form an Integrase-type zinc finger. Histidine 1186, histidine 1190, cysteine 1214, and cysteine 1217 together coordinate Zn(2+). The 151-residue stretch at 1228–1378 (VDYSPEIWQI…TAGERLLDIL (151 aa)) folds into the Integrase catalytic domain. Residues aspartate 1238 and aspartate 1290 each contribute to the Mg(2+) site. Residues 1397 to 1444 (FRVYYRDARDPIWKGPARLLWKGEGAVVIKEGEDIKVVPRRKAKIIKE) constitute a DNA-binding region (integrase-type).

As to quaternary structure, homotrimer. Interacts with gp41 (via C-terminus). In terms of assembly, homodimer. The active site consists of two apposed aspartic acid residues. Heterodimer of p66 RT and p51 RT (RT p66/p51). Heterodimerization of RT is essential for DNA polymerase activity. Despite the sequence identities, p66 RT and p51 RT have distinct folding. As to quaternary structure, homotetramer; may further associate as a homohexadecamer. Requires Mg(2+) as cofactor. In terms of processing, specific enzymatic cleavages by the viral protease yield mature proteins. The protease is released by autocatalytic cleavage. The polyprotein is cleaved during and after budding, this process is termed maturation. Proteolytic cleavage of p66 RT removes the RNase H domain to yield the p51 RT subunit. Post-translationally, capsid protein p24 is phosphorylated.

It localises to the virion. The protein resides in the host nucleus. The protein localises to the host cytoplasm. Its subcellular location is the host cell membrane. It carries out the reaction Specific for a P1 residue that is hydrophobic, and P1' variable, but often Pro.. It catalyses the reaction Endohydrolysis of RNA in RNA/DNA hybrids. Three different cleavage modes: 1. sequence-specific internal cleavage of RNA. Human immunodeficiency virus type 1 and Moloney murine leukemia virus enzymes prefer to cleave the RNA strand one nucleotide away from the RNA-DNA junction. 2. RNA 5'-end directed cleavage 13-19 nucleotides from the RNA end. 3. DNA 3'-end directed cleavage 15-20 nucleotides away from the primer terminus.. The catalysed reaction is 3'-end directed exonucleolytic cleavage of viral RNA-DNA hybrid.. The enzyme catalyses DNA(n) + a 2'-deoxyribonucleoside 5'-triphosphate = DNA(n+1) + diphosphate. With respect to regulation, the viral protease is inhibited by many synthetic protease inhibitors (PIs), such as amprenavir, atazanavir, indinavir, loprinavir, nelfinavir, ritonavir and saquinavir. RT can be inhibited either by nucleoside RT inhibitors (NRTIs) or by non nucleoside RT inhibitors (NNRTIs). NRTIs act as chain terminators, whereas NNRTIs inhibit DNA polymerization by binding a small hydrophobic pocket near the RT active site and inducing an allosteric change in this region. Classical NRTIs are abacavir, adefovir (PMEA), didanosine (ddI), lamivudine (3TC), stavudine (d4T), tenofovir (PMPA), zalcitabine (ddC), and zidovudine (AZT). Classical NNRTIs are atevirdine (BHAP U-87201E), delavirdine, efavirenz (DMP-266), emivirine (I-EBU), and nevirapine (BI-RG-587). The tritherapies used as a basic effective treatment of AIDS associate two NRTIs and one NNRTI. Use of protease inhibitors in tritherapy regimens permit more ambitious therapeutic strategies. In terms of biological role, gag-Pol polyprotein and Gag polyprotein may regulate their own translation, by the binding genomic RNA in the 5'-UTR. At low concentration, Gag-Pol and Gag would promote translation, whereas at high concentration, the polyproteins encapsidate genomic RNA and then shut off translation. Its function is as follows. Matrix protein p17 has two main functions: in infected cell, it targets Gag and Gag-pol polyproteins to the plasma membrane via a multipartite membrane-binding signal, that includes its myristointegration complex. The myristoylation signal and the NLS exert conflicting influences its subcellular localization. The key regulation of these motifs might be phosphorylation of a portion of MA molecules on the C-terminal tyrosine at the time of virus maturation, by virion-associated cellular tyrosine kinase. Implicated in the release from host cell mediated by Vpu. Capsid protein p24 forms the conical core that encapsulates the genomic RNA-nucleocapsid complex in the virion. The core is constituted by capsid protein hexamer subunits. The core is disassembled soon after virion entry. Interaction with host PPIA/CYPA protects the virus from restriction by host TRIM5-alpha and from an unknown antiviral activity in host cells. This capsid restriction by TRIM5 is one of the factors which restricts SIV to the simian species. Functionally, nucleocapsid protein p7 encapsulates and protects viral dimeric unspliced (genomic) RNA. Binds these RNAs through its zinc fingers. Facilitates rearangement of nucleic acid secondary structure during retrotranscription of genomic RNA. This capability is referred to as nucleic acid chaperone activity. In terms of biological role, the aspartyl protease mediates proteolytic cleavages of Gag and Gag-Pol polyproteins during or shortly after the release of the virion from the plasma membrane. Cleavages take place as an ordered, step-wise cascade to yield mature proteins. This process is called maturation. Displays maximal activity during the budding process just prior to particle release from the cell. Also cleaves Nef and Vif, probably concomitantly with viral structural proteins on maturation of virus particles. Hydrolyzes host EIF4GI and PABP1 in order to shut off the capped cellular mRNA translation. The resulting inhibition of cellular protein synthesis serves to ensure maximal viral gene expression and to evade host immune response. Its function is as follows. Reverse transcriptase/ribonuclease H (RT) is a multifunctional enzyme that converts the viral dimeric RNA genome into dsDNA in the cytoplasm, shortly after virus entry into the cell. This enzyme displays a DNA polymerase activity that can copy either DNA or RNA templates, and a ribonuclease H (RNase H) activity that cleaves the RNA strand of RNA-DNA heteroduplexes in a partially processive 3' to 5' endonucleasic mode. Conversion of viral genomic RNA into dsDNA requires many steps. A tRNA binds to the primer-binding site (PBS) situated at the 5'-end of the viral RNA. RT uses the 3' end of the tRNA primer to perform a short round of RNA-dependent minus-strand DNA synthesis. The reading proceeds through the U5 region and ends after the repeated (R) region which is present at both ends of viral RNA. The portion of the RNA-DNA heteroduplex is digested by the RNase H, resulting in a ssDNA product attached to the tRNA primer. This ssDNA/tRNA hybridizes with the identical R region situated at the 3' end of viral RNA. This template exchange, known as minus-strand DNA strong stop transfer, can be either intra- or intermolecular. RT uses the 3' end of this newly synthesized short ssDNA to perform the RNA-dependent minus-strand DNA synthesis of the whole template. RNase H digests the RNA template except for two polypurine tracts (PPTs) situated at the 5'-end and near the center of the genome. It is not clear if both polymerase and RNase H activities are simultaneous. RNase H can probably proceed both in a polymerase-dependent (RNA cut into small fragments by the same RT performing DNA synthesis) and a polymerase-independent mode (cleavage of remaining RNA fragments by free RTs). Secondly, RT performs DNA-directed plus-strand DNA synthesis using the PPTs that have not been removed by RNase H as primers. PPTs and tRNA primers are then removed by RNase H. The 3' and 5' ssDNA PBS regions hybridize to form a circular dsDNA intermediate. Strand displacement synthesis by RT to the PBS and PPT ends produces a blunt ended, linear dsDNA copy of the viral genome that includes long terminal repeats (LTRs) at both ends. Integrase catalyzes viral DNA integration into the host chromosome, by performing a series of DNA cutting and joining reactions. This enzyme activity takes place after virion entry into a cell and reverse transcription of the RNA genome in dsDNA. The first step in the integration process is 3' processing. This step requires a complex comprising the viral genome, matrix protein, Vpr and integrase. This complex is called the pre-integration complex (PIC). The integrase protein removes 2 nucleotides from each 3' end of the viral DNA, leaving recessed CA OH's at the 3' ends. In the second step, the PIC enters cell nucleus. This process is mediated through integrase and Vpr proteins, and allows the virus to infect a non dividing cell. This ability to enter the nucleus is specific of lentiviruses, other retroviruses cannot and rely on cell division to access cell chromosomes. In the third step, termed strand transfer, the integrase protein joins the previously processed 3' ends to the 5' ends of strands of target cellular DNA at the site of integration. The 5'-ends are produced by integrase-catalyzed staggered cuts, 5 bp apart. A Y-shaped, gapped, recombination intermediate results, with the 5'-ends of the viral DNA strands and the 3' ends of target DNA strands remaining unjoined, flanking a gap of 5 bp. The last step is viral DNA integration into host chromosome. This involves host DNA repair synthesis in which the 5 bp gaps between the unjoined strands are filled in and then ligated. Since this process occurs at both cuts flanking the SIV genome, a 5 bp duplication of host DNA is produced at the ends of SIV integration. Alternatively, Integrase may catalyze the excision of viral DNA just after strand transfer, this is termed disintegration. The protein is Gag-Pol polyprotein (gag-pol) of Simian immunodeficiency virus (isolate TAN1) (SIV-cpz).